A 308-amino-acid chain; its full sequence is uncharacterized protein (308 aa).

One can recognise an HTH lysR-type domain in the interval 1–60 (MNYSLKQLKVFVTVAQEKSFSRAGERIGLSQSAVSHSVKELENHTGVRLLDRTTREVVLT). The H-T-H motif DNA-binding region spans 20 to 39 (FSRAGERIGLSQSAVSHSVK).

This sequence belongs to the LysR transcriptional regulatory family.

This is an uncharacterized protein from Shigella flexneri.